The following is a 1162-amino-acid chain: DNA-directed RNA polymerase subunit beta (1162 aa).

This sequence belongs to the RNA polymerase beta chain family. In terms of assembly, the RNAP catalytic core consists of 2 alpha, 1 beta, 1 beta' and 1 omega subunit. When a sigma factor is associated with the core the holoenzyme is formed, which can initiate transcription.

The catalysed reaction is RNA(n) + a ribonucleoside 5'-triphosphate = RNA(n+1) + diphosphate. In terms of biological role, DNA-dependent RNA polymerase catalyzes the transcription of DNA into RNA using the four ribonucleoside triphosphates as substrates. The protein is DNA-directed RNA polymerase subunit beta of Clavibacter sepedonicus (Clavibacter michiganensis subsp. sepedonicus).